The primary structure comprises 503 residues: Cytochrome P450 7A1 (503 aa).

The chain crosses the membrane as a helical span at residues Ile4 to Ile24. A heme-binding site is contributed by Cys444.

This sequence belongs to the cytochrome P450 family. Heme serves as cofactor.

The protein resides in the endoplasmic reticulum membrane. It localises to the microsome membrane. It carries out the reaction cholesterol + reduced [NADPH--hemoprotein reductase] + O2 = 7alpha-hydroxycholesterol + oxidized [NADPH--hemoprotein reductase] + H2O + H(+). The catalysed reaction is 4beta-hydroxycholesterol + reduced [NADPH--hemoprotein reductase] + O2 = 4beta,7alpha-dihydroxycholesterol + oxidized [NADPH--hemoprotein reductase] + H2O + H(+). The enzyme catalyses lathosterol + reduced [NADPH--hemoprotein reductase] + O2 = 7alpha,8alpha-epoxy-5alpha-cholestan-3beta-ol + oxidized [NADPH--hemoprotein reductase] + H2O + H(+). It catalyses the reaction lathosterol + reduced [NADPH--hemoprotein reductase] + O2 = 5alpha-cholestan-7-oxo-3beta-ol + oxidized [NADPH--hemoprotein reductase] + H2O + H(+). It carries out the reaction 7-dehydrocholesterol + reduced [NADPH--hemoprotein reductase] + O2 = 7-oxocholesterol + oxidized [NADPH--hemoprotein reductase] + H2O + H(+). The catalysed reaction is (24S)-hydroxycholesterol + reduced [NADPH--hemoprotein reductase] + O2 = (24S)-7alpha-dihydroxycholesterol + oxidized [NADPH--hemoprotein reductase] + H2O + H(+). The enzyme catalyses (24R)-hydroxycholesterol + reduced [NADPH--hemoprotein reductase] + O2 = (24R)-7alpha-dihydroxycholesterol + oxidized [NADPH--hemoprotein reductase] + H2O + H(+). Its pathway is lipid metabolism; bile acid biosynthesis. It participates in steroid metabolism; cholesterol degradation. A cytochrome P450 monooxygenase involved in the metabolism of endogenous cholesterol and its oxygenated derivatives (oxysterols). Mechanistically, uses molecular oxygen inserting one oxygen atom into a substrate, and reducing the second into a water molecule, with two electrons provided by NADPH via cytochrome P450 reductase (CPR; NADPH-ferrihemoprotein reductase). Functions as a critical regulatory enzyme of bile acid biosynthesis and cholesterol homeostasis. Catalyzes the hydroxylation of carbon hydrogen bond at 7-alpha position of cholesterol, a rate-limiting step in cholesterol catabolism and bile acid biosynthesis. 7-alpha hydroxylates several oxysterols, including 4beta-hydroxycholesterol and 24-hydroxycholesterol. Catalyzes the oxidation of the 7,8 double bond of 7-dehydrocholesterol and lathosterol with direct and predominant formation of the 7-keto derivatives. The chain is Cytochrome P450 7A1 from Mus musculus (Mouse).